We begin with the raw amino-acid sequence, 409 residues long: Cuticle-degrading serine protease (409 aa).

An N-terminal signal peptide occupies residues M1–A21. Residues G22–Y123 constitute a propeptide that is removed on maturation. The region spanning K39–T122 is the Inhibitor I9 domain. The Peptidase S8 domain maps to T130–A409. The active-site Charge relay system is D164. N-linked (GlcNAc...) asparagine glycosylation is present at N178. The active-site Charge relay system is the H200. Residue N252 is glycosylated (N-linked (GlcNAc...) asparagine). Residue S353 is the Charge relay system of the active site.

This sequence belongs to the peptidase S8 family.

The protein resides in the secreted. Inhibited by PMSF, SSI, the peptide Phe-Val and by Phe, but not by EDTA. Its function is as follows. Hydrolyzes gelatin, casein, the chromogenic substrate azocoll and the cuticle of the nematode P.redivivus. Immobilizes P.redivivus. The polypeptide is Cuticle-degrading serine protease (Arthrobotrys oligospora (strain ATCC 24927 / CBS 115.81 / DSM 1491) (Nematode-trapping fungus)).